The following is a 345-amino-acid chain: MDIFREIASSMKGENVFISPASISSVLTILYYGANGSTAEQLSKYVEKEENMDKVSAQNISFKSINKVYGRYSAVFKDSFLRKIGDKFQTVDFTDCRTIDAINKCVDIFTEGKINPLLDEQLSPDTCLLAISAVYFKAKWLTPFEKEFTSDYPFYVSPTEMVDVSMMSMYGKAFNHASVKESFGNFSIIELPYVGDTSMMVILPDKIDGLESIEQNLTDTNFKKWCNSLEATFIDVHIPKFKVTGSYNLVDTLVKSGLTEVFGSTGDYSNMCNLDVSVDAMIHKTYIDVNEEYTEAAAATSVLVADCASTVTNEFCADHPFIYVIRHVDGKILFVGRYCSPTTNC.

It belongs to the serpin family. Poxviruses subfamily.

It localises to the host cytoplasm. Functionally, viral serpin that inhibits both cysteine and serine proteinases involved in the regulation of host inflammatory and apoptosis processes. Major anti-apoptotic protein which inhibits both intrinsic and extrinsic pathways and strongly cleaves host CASP1 and CASP8 but is a rather poor inhibitor of host CASP3. Prevents the proteolytic activity of host interleukin-1-beta converting enzyme (ICE) and ICE-like enzymes. Can also block apoptosis through host tumor necrosis factor (TNF) receptor. The inhibition of host ICE is an example of a 'cross-class' interaction, in which a serpin inhibits a non-serine proteinase. Also inhibits granzyme B. This Rabbitpox virus (strain Utrecht) (RPV) protein is Serine proteinase inhibitor 2 (OPG199).